Here is a 438-residue protein sequence, read N- to C-terminus: Death-associated inhibitor of apoptosis 1 (438 aa).

Residues 44 to 110 form a BIR 1 repeat; the sequence is EETRLKTFTD…QRWSPNCPLL (67 aa). The segment at 194–213 is disordered; it reads TATQATGDVQPETCRPSAAS. Residues 226-293 form a BIR 2 repeat; the sequence is ETARLRTFEA…ALWLSQCRFV (68 aa). The Zn(2+) site is built by C263, C266, H283, and C290. Positions 322–346 are disordered; that stretch reads GGVAVASTQASEEEQQTSLSSEEAV. Low complexity predominate over residues 327 to 345; that stretch reads ASTQASEEEQQTSLSSEEA. The RING-type zinc finger occupies 391 to 426; the sequence is CKICYGAEYNTAFLPCGHVVACAKCASSVTKCPLCR.

The protein belongs to the IAP family. Interacts (via BIR 2 domain) with Dronc (via residues 114-125). Rpr, hid and grim can outcompete Dronc for binding Diap1 therefore removing Diap1-mediated ubiquitination. Interacts (via BIR 2 domain) with HtrA2; this displaces any bound Dronc. Interacts with Strica. The N-terminally cleaved form interacts with Ubr3 (via UBR-type zinc finger); the interaction promotes the recruitment and uniquitination of substrate capases such as Dronc. In terms of processing, ubiquitinated and degraded by HtrA2 in apoptotic cells; proteolytic cleavage at specific sites in the BIR domain linker region generating inactive fragments. Mutation of one site reduces but does not abolish cleavage as another site is selected by the protease.

It catalyses the reaction S-ubiquitinyl-[E2 ubiquitin-conjugating enzyme]-L-cysteine + [acceptor protein]-L-lysine = [E2 ubiquitin-conjugating enzyme]-L-cysteine + N(6)-ubiquitinyl-[acceptor protein]-L-lysine.. Its function is as follows. Anti-apoptotic protein which functions as a caspase regulator, using its E3 ubiquitin-protein ligase activity to smother caspase activity. Binds, ubiquitinates and inactivates initiator caspase Dronc, and effector caspases Drice and Dcp-1. Acts as a Nedd8-E3 ubiquitin-protein ligase for Drice. Suppresses apoptosis by targeting the apoptosome for ubiquitination and inactivation. Plays an important role in cell motility. Overexpression suppresses rpr and hid-dependent cell death in the eye. Interaction of Diap1 with Dronc is required to suppress Dronc-mediated cell death through Diap1-mediated ubiquitination of Dronc. Acts as a positive regulator of Wnt signaling. The chain is Death-associated inhibitor of apoptosis 1 (Diap1) from Drosophila melanogaster (Fruit fly).